Reading from the N-terminus, the 440-residue chain is Exodeoxyribonuclease 7 large subunit (440 aa).

The protein belongs to the XseA family. In terms of assembly, heterooligomer composed of large and small subunits.

It localises to the cytoplasm. It catalyses the reaction Exonucleolytic cleavage in either 5'- to 3'- or 3'- to 5'-direction to yield nucleoside 5'-phosphates.. In terms of biological role, bidirectionally degrades single-stranded DNA into large acid-insoluble oligonucleotides, which are then degraded further into small acid-soluble oligonucleotides. The protein is Exodeoxyribonuclease 7 large subunit of Ralstonia nicotianae (strain ATCC BAA-1114 / GMI1000) (Ralstonia solanacearum).